We begin with the raw amino-acid sequence, 290 residues long: MITIKNITLNDPLIIASGIIPDVPNYVETICEKYKPSAITTKTVTLNPLEPHKPPTVIKLHDGIYMNAIGLGNPGAKAINEIGVLCPLIVSVGGSSINEIKEVVEVVQSKAKIIEINVSSPNRKGYGESLSKLIGDIIESVKSVTKLPVFVKLGPWDNVIELAGKALEKGADGLTLINTIKGLIIDVETFKPILYYGTGGVSGRCLYPIALRIIKDVYEEYGVDIIGVGGVYDWTDVIGMLAAGAKLVGLGTVLIEKGFSVIEEIRKGLQSYLLEKGLKFEDIIGISVRK.

FMN contacts are provided by residues serine 17 and 42 to 43; that span reads KT. Residues lysine 42, 67 to 71, and asparagine 117 each bind substrate; that span reads NAIGL. Asparagine 117 provides a ligand contact to FMN. The active-site Nucleophile is the serine 120. Residues lysine 152 and isoleucine 177 each contribute to the FMN site. 178–179 contributes to the substrate binding site; that stretch reads NT. FMN is bound by residues glycine 203, 229 to 230, and 251 to 252; these read GG and GT.

The protein belongs to the dihydroorotate dehydrogenase family. Type 1 subfamily. In terms of assembly, heterotetramer of 2 PyrK and 2 PyrD type B subunits. FMN is required as a cofactor.

The protein resides in the cytoplasm. It catalyses the reaction (S)-dihydroorotate + NAD(+) = orotate + NADH + H(+). It participates in pyrimidine metabolism; UMP biosynthesis via de novo pathway; orotate from (S)-dihydroorotate (NAD(+) route): step 1/1. Functionally, catalyzes the conversion of dihydroorotate to orotate with NAD(+) as electron acceptor. The chain is Dihydroorotate dehydrogenase B (NAD(+)), catalytic subunit (pyrD) from Saccharolobus solfataricus (strain ATCC 35092 / DSM 1617 / JCM 11322 / P2) (Sulfolobus solfataricus).